The following is a 390-amino-acid chain: MKGDQEVQVIVQQGKEPIPTDQDERSSVSGSQTKLSHSNTYKRWLRVAIYTFFVISGQSVATILGRLYYENGGNSKWLATVVQLVGFPILLPYHLLSVKTHTTTQRDGKLTSLRNRALVYIVLGLLVGAACYLYSIGLLYLPVSTLSLICASQLAFTAFFSYLLNSQKLTPIILNSLFLLTISSTLLAFNNEESDSKKVTKGEYVKGFVCTVGASAGFGLLLSLQQLAFRKVLKKQTFSEVINMIIYMSLVASCVSVVGLFASSEWKTLSSEMENYKLGKVSYVMNLVWTAVTWQVFSIGCTGLIFELSSLFSNAISALGLPVVPILAVIIFHDKMNGLKVISMILAIWGFVSYVYQQYLDETNLKKSNEIPTTESPDRPEAEGSSEQSK.

Positions 12–34 (QQGKEPIPTDQDERSSVSGSQTK) are disordered. The next 10 helical transmembrane spans lie at 44 to 64 (WLRV…ATIL), 78 to 98 (LATV…LLSV), 118 to 138 (LVYI…SIGL), 140 to 160 (YLPV…TAFF), 169 to 189 (LTPI…LLAF), 204 to 224 (YVKG…LLSL), 241 to 261 (VINM…VGLF), 287 to 307 (LVWT…LIFE), 312 to 332 (FSNA…VIIF), and 336 to 356 (MNGL…SYVY). A disordered region spans residues 367 to 390 (KSNEIPTTESPDRPEAEGSSEQSK).

The protein belongs to the purine permeases (TC 2.A.7.14) family. As to expression, expressed in mesophyll cells.

Its subcellular location is the membrane. The protein is Purine permease 21 of Arabidopsis thaliana (Mouse-ear cress).